Consider the following 523-residue polypeptide: Cysteine-rich secretory protein LCCL domain-containing 1 (523 aa).

The first 23 residues, 1–23 (MKYVVQEWLRITTLLFIAQAVSA), serve as a signal peptide directing secretion. In terms of domain architecture, SCP spans 66–206 (LDLHNKLRGQ…PKAVYLVCNY (141 aa)). Residues 246-298 (ERPYSPHEPEEETNEIERQRSKAQDATAQSRPRTHSPSGSTGSEDSEKNEVIS) are disordered. Over residues 269–288 (QDATAQSRPRTHSPSGSTGS) the composition is skewed to polar residues. 2 LCCL domains span residues 302 to 397 (MSQI…ANSF) and 403 to 505 (TVQA…PGKQ). 4 disulfide bridges follow: C308–C326, C330–C350, C409–C431, and C435–C458.

The protein belongs to the CRISP family.

The protein resides in the secreted. The sequence is that of Cysteine-rich secretory protein LCCL domain-containing 1 (CRISPLD1) from Gallus gallus (Chicken).